The following is a 153-amino-acid chain: UPF0756 membrane protein BA_4840/GBAA_4840/BAS4489 (153 aa).

4 consecutive transmembrane segments (helical) span residues 8-28, 54-74, 87-107, and 117-137; these read FLFILLIIGLIAKNQSLTVAI, LGVTVITIAVLVPIATGEIGF, WIALASGVAVALLAKGGVQLL, and LVFGTIIAVALFNGVAVGPLI.

This sequence belongs to the UPF0756 family.

It localises to the cell membrane. The sequence is that of UPF0756 membrane protein BA_4840/GBAA_4840/BAS4489 from Bacillus anthracis.